Reading from the N-terminus, the 378-residue chain is Probable dihydroorotase-like protein (378 aa).

This sequence belongs to the metallo-dependent hydrolases superfamily. DHOase family. PyrC' subfamily.

Its function is as follows. Non-functional DHOase. The polypeptide is Probable dihydroorotase-like protein (pyrC') (Helicobacter pylori (strain J99 / ATCC 700824) (Campylobacter pylori J99)).